Reading from the N-terminus, the 318-residue chain is V-set and immunoglobulin domain-containing protein 1 (318 aa).

Residues 1 to 19 form the signal peptide; it reads MSFLLFITLGLSLTALSHC. Residues 20–131 form the Ig-like V-type domain; sequence VQVTIQNPII…SSGQGKILLT (112 aa). The Extracellular portion of the chain corresponds to 20–233; the sequence is VQVTIQNPII…TGGEGGVIAA (214 aa). 2 disulfide bridges follow: Cys41-Cys114 and Cys157-Cys207. Positions 136–223 constitute an Ig-like C2-type domain; it reads PSVPHCSIRG…GNATCELNLH (88 aa). The chain crosses the membrane as a helical span at residues 234-254; the sequence is AVIGGLLAAAIIIAIVWFLVV. Residues 255–318 are Cytoplasmic-facing; that stretch reads KRKQKKQLPP…ANGETEEPTA (64 aa). Positions 261–318 are disordered; sequence QLPPTKEMKTGGNQYMAVSGEANEPPKENLGASEPTETIQFHDHAENAANGETEEPTA.

In terms of tissue distribution, expressed in thymocytes.

It localises to the membrane. This is V-set and immunoglobulin domain-containing protein 1 (vsig1) from Xenopus laevis (African clawed frog).